Consider the following 623-residue polypeptide: UvrABC system protein C (623 aa).

The 80-residue stretch at 12–91 folds into the GIY-YIG domain; the sequence is PSPGVYLMKS…IKQHRPKYNI (80 aa). Residues 201–236 enclose the UVR domain; that stretch reads TEVARLYRSKMNLAAEQMRYEDAARYRDLLRAIEVT. The interval 603 to 623 is disordered; sequence RLHGSPLPNPPPPGEGAMDRK.

The protein belongs to the UvrC family. As to quaternary structure, interacts with UvrB in an incision complex.

It is found in the cytoplasm. Its function is as follows. The UvrABC repair system catalyzes the recognition and processing of DNA lesions. UvrC both incises the 5' and 3' sides of the lesion. The N-terminal half is responsible for the 3' incision and the C-terminal half is responsible for the 5' incision. This chain is UvrABC system protein C, found in Citrifermentans bemidjiense (strain ATCC BAA-1014 / DSM 16622 / JCM 12645 / Bem) (Geobacter bemidjiensis).